Reading from the N-terminus, the 140-residue chain is Putative pre-16S rRNA nuclease (140 aa).

Belongs to the YqgF nuclease family.

The protein resides in the cytoplasm. Functionally, could be a nuclease involved in processing of the 5'-end of pre-16S rRNA. The chain is Putative pre-16S rRNA nuclease from Halalkalibacterium halodurans (strain ATCC BAA-125 / DSM 18197 / FERM 7344 / JCM 9153 / C-125) (Bacillus halodurans).